The primary structure comprises 126 residues: NADH-quinone oxidoreductase subunit A (126 aa).

The next 3 helical transmembrane spans lie at 14 to 34 (FLYF…TSWF), 66 to 86 (FYLI…LYAW), and 96 to 116 (IGFV…FYLV).

The protein belongs to the complex I subunit 3 family. NDH-1 is composed of 13 different subunits. Subunits NuoA, H, J, K, L, M, N constitute the membrane sector of the complex.

The protein localises to the cell membrane. It catalyses the reaction a quinone + NADH + 5 H(+)(in) = a quinol + NAD(+) + 4 H(+)(out). NDH-1 shuttles electrons from NADH, via FMN and iron-sulfur (Fe-S) centers, to quinones in the respiratory chain. The immediate electron acceptor for the enzyme in this species is believed to be ubiquinone. Couples the redox reaction to proton translocation (for every two electrons transferred, four hydrogen ions are translocated across the cytoplasmic membrane), and thus conserves the redox energy in a proton gradient. This chain is NADH-quinone oxidoreductase subunit A, found in Buchnera aphidicola subsp. Schizaphis graminum (strain Sg).